Consider the following 413-residue polypeptide: CinA-like protein (413 aa).

This sequence belongs to the CinA family.

The polypeptide is CinA-like protein (Desulfotalea psychrophila (strain LSv54 / DSM 12343)).